The sequence spans 388 residues: ATP phosphoribosyltransferase regulatory subunit (388 aa).

The protein belongs to the class-II aminoacyl-tRNA synthetase family. HisZ subfamily. As to quaternary structure, heteromultimer composed of HisG and HisZ subunits.

The protein localises to the cytoplasm. It participates in amino-acid biosynthesis; L-histidine biosynthesis; L-histidine from 5-phospho-alpha-D-ribose 1-diphosphate: step 1/9. Required for the first step of histidine biosynthesis. May allow the feedback regulation of ATP phosphoribosyltransferase activity by histidine. This Acinetobacter baumannii (strain AB307-0294) protein is ATP phosphoribosyltransferase regulatory subunit.